The chain runs to 298 residues: ATP synthase gamma chain (298 aa).

The protein belongs to the ATPase gamma chain family. In terms of assembly, F-type ATPases have 2 components, CF(1) - the catalytic core - and CF(0) - the membrane proton channel. CF(1) has five subunits: alpha(3), beta(3), gamma(1), delta(1), epsilon(1). CF(0) has three main subunits: a, b and c.

Its subcellular location is the cell inner membrane. Produces ATP from ADP in the presence of a proton gradient across the membrane. The gamma chain is believed to be important in regulating ATPase activity and the flow of protons through the CF(0) complex. The chain is ATP synthase gamma chain from Desulforapulum autotrophicum (strain ATCC 43914 / DSM 3382 / VKM B-1955 / HRM2) (Desulfobacterium autotrophicum).